The primary structure comprises 281 residues: sn-glycerol-3-phosphate transport system permease protein UgpE (281 aa).

Helical transmembrane passes span 16–36 (LILGIAVILFPLYVAFVAATL), 85–105 (FSITLGKITVSMLSAFAIVWF), 113–133 (FFWMIFITLMLPVEVRIFPTV), 142–162 (LDSYAGLTLPLMASATATFLF), 202–222 (ALFVITFIYGWNQYLWPLLII), and 247–267 (WNSVMAAMLLTLIPPVVIVLV). One can recognise an ABC transmembrane type-1 domain in the interval 77–268 (LLNSFVMAFS…IPPVVIVLVM (192 aa)).

The protein belongs to the binding-protein-dependent transport system permease family. UgpAE subfamily. The complex is composed of two ATP-binding proteins (UgpC), two transmembrane proteins (UgpA and UgpE) and a solute-binding protein (UgpB).

Its subcellular location is the cell inner membrane. Functionally, part of the ABC transporter complex UgpBAEC involved in sn-glycerol-3-phosphate (G3P) import. Probably responsible for the translocation of the substrate across the membrane. The polypeptide is sn-glycerol-3-phosphate transport system permease protein UgpE (ugpE) (Shigella dysenteriae serotype 1 (strain Sd197)).